A 712-amino-acid polypeptide reads, in one-letter code: Amino-acid acetyltransferase, mitochondrial (712 aa).

The transit peptide at 1 to 47 (MFVRTCRSSCNAWTNATSTTQAGSLLPPNAHRSVVLTLSLQACSART) directs the protein to the mitochondrion. The disordered stretch occupies residues 55–99 (FASTTSQSKRQEAEAEEKRQVSPRLGPSAPRSSYPSSAEARQKRD). Over residues 63–74 (KRQEAEAEEKRQ) the composition is skewed to basic and acidic residues. Low complexity predominate over residues 81-93 (PSAPRSSYPSSAE). The N-acetyltransferase domain maps to 534–702 (GVPRLRLTDT…YEDVCRNIAP (169 aa)).

This sequence belongs to the acetyltransferase family.

It is found in the mitochondrion. The enzyme catalyses L-glutamate + acetyl-CoA = N-acetyl-L-glutamate + CoA + H(+). The protein operates within amino-acid biosynthesis; L-arginine biosynthesis; N(2)-acetyl-L-ornithine from L-glutamate: step 1/4. Inhibited by arginine. N-acetylglutamate synthase involved in arginine biosynthesis. This chain is Amino-acid acetyltransferase, mitochondrial (arg-14), found in Neurospora crassa (strain ATCC 24698 / 74-OR23-1A / CBS 708.71 / DSM 1257 / FGSC 987).